Consider the following 65-residue polypeptide: Large ribosomal subunit protein bL28 (65 aa).

Belongs to the bacterial ribosomal protein bL28 family.

This is Large ribosomal subunit protein bL28 from Lachnoclostridium phytofermentans (strain ATCC 700394 / DSM 18823 / ISDg) (Clostridium phytofermentans).